A 427-amino-acid polypeptide reads, in one-letter code: Nucleolar and spindle-associated protein 1 (427 aa).

The interval 41–190 (AHLNPETRKE…LGNNKRTSAT (150 aa)) is disordered. Residues 43 to 55 (LNPETRKENKNQD) show a composition bias toward basic and acidic residues. Basic residues predominate over residues 83–96 (TKTRRRRRKKHKTI). The span at 119-128 (NFQNQENQEN) shows a compositional bias: low complexity. Ser139 carries the phosphoserine modification. Residues 159–179 (NDIKDSKKPLEKRSLCTDEFS) show a composition bias toward basic and acidic residues. The span at 181–190 (LGNNKRTSAT) shows a compositional bias: polar residues. Thr191 carries the post-translational modification Phosphothreonine. The disordered stretch occupies residues 235 to 312 (IVTPVPPRGR…QAVFRTPKSK (78 aa)). An interaction with microtubules region spans residues 243–367 (GRLSVPCTPA…HKGKLKPWGQ (125 aa)). Ser246 carries the post-translational modification Phosphoserine. Thr250 bears the Phosphothreonine mark. The segment covering 252 to 264 (ARQQCPQGHSATK) has biased composition (polar residues). The residue at position 261 (Ser261) is a Phosphoserine. 2 positions are modified to phosphothreonine: Thr323 and Thr334. Phosphoserine occurs at positions 337 and 348. Residues 354–427 (NYKPHKGKLK…RRNLGVTKAQ (74 aa)) are disordered. Positions 369 to 375 (KENNSLN) match the KEN box motif. Positions 393–425 (LQTREERWKRQEQERKEKKEKLLEARRNLGVTK) form a coiled coil. Residues 394–419 (QTREERWKRQEQERKEKKEKLLEARR) show a composition bias toward basic and acidic residues.

Belongs to the NUSAP family. As to quaternary structure, interacts with DNA and microtubules. Microtubule bundling is inhibited by IPO7, KPNA2 and KPNB1 while association with DNA is also inhibited by IPO7 and KPNA2. In terms of processing, ubiquitinated. Ubiquitination by FZR1 may lead to proteasome-dependent degradation of this protein.

The protein localises to the cytoplasm. It is found in the nucleus. It localises to the nucleolus. Its subcellular location is the cytoskeleton. The protein resides in the spindle. The protein localises to the chromosome. In terms of biological role, microtubule-associated protein with the capacity to bundle and stabilize microtubules. May associate with chromosomes and promote the organization of mitotic spindle microtubules around them. In Mus musculus (Mouse), this protein is Nucleolar and spindle-associated protein 1 (Nusap1).